We begin with the raw amino-acid sequence, 958 residues long: Glycine dehydrogenase (decarboxylating) (958 aa).

Lysine 707 is subject to N6-(pyridoxal phosphate)lysine.

It belongs to the GcvP family. The glycine cleavage system is composed of four proteins: P, T, L and H. Pyridoxal 5'-phosphate is required as a cofactor.

The enzyme catalyses N(6)-[(R)-lipoyl]-L-lysyl-[glycine-cleavage complex H protein] + glycine + H(+) = N(6)-[(R)-S(8)-aminomethyldihydrolipoyl]-L-lysyl-[glycine-cleavage complex H protein] + CO2. Its function is as follows. The glycine cleavage system catalyzes the degradation of glycine. The P protein binds the alpha-amino group of glycine through its pyridoxal phosphate cofactor; CO(2) is released and the remaining methylamine moiety is then transferred to the lipoamide cofactor of the H protein. This chain is Glycine dehydrogenase (decarboxylating), found in Stutzerimonas stutzeri (strain A1501) (Pseudomonas stutzeri).